A 142-amino-acid polypeptide reads, in one-letter code: Antirestriction protein KlcA (142 aa).

Belongs to the antirestriction protein family.

Its function is as follows. Could be involved in overcoming restriction barriers during establishment after conjugative transfer. The sequence is that of Antirestriction protein KlcA (klcA) from Escherichia coli.